Reading from the N-terminus, the 180-residue chain is NADH-quinone oxidoreductase subunit B (180 aa).

Cysteine 59, cysteine 60, cysteine 124, and cysteine 154 together coordinate [4Fe-4S] cluster.

It belongs to the complex I 20 kDa subunit family. In terms of assembly, NDH-1 is composed of 14 different subunits. Subunits NuoB, C, D, E, F, and G constitute the peripheral sector of the complex. [4Fe-4S] cluster is required as a cofactor.

It is found in the cell inner membrane. It catalyses the reaction a quinone + NADH + 5 H(+)(in) = a quinol + NAD(+) + 4 H(+)(out). Its function is as follows. NDH-1 shuttles electrons from NADH, via FMN and iron-sulfur (Fe-S) centers, to quinones in the respiratory chain. The immediate electron acceptor for the enzyme in this species is believed to be ubiquinone. Couples the redox reaction to proton translocation (for every two electrons transferred, four hydrogen ions are translocated across the cytoplasmic membrane), and thus conserves the redox energy in a proton gradient. This Beijerinckia indica subsp. indica (strain ATCC 9039 / DSM 1715 / NCIMB 8712) protein is NADH-quinone oxidoreductase subunit B.